A 124-amino-acid chain; its full sequence is Small ribosomal subunit protein eS6 (124 aa).

This sequence belongs to the eukaryotic ribosomal protein eS6 family.

In Methanococcus maripaludis (strain C5 / ATCC BAA-1333), this protein is Small ribosomal subunit protein eS6.